The primary structure comprises 202 residues: Proteasome subunit beta 1 (202 aa).

Met-1 is a propeptide (removed in mature form; by autocatalysis). Residue Thr-2 is the Nucleophile of the active site.

Belongs to the peptidase T1B family. The 20S proteasome core is composed of 14 alpha and 14 beta subunits that assemble into four stacked heptameric rings, resulting in a barrel-shaped structure. The two inner rings, each composed of seven catalytic beta subunits, are sandwiched by two outer rings, each composed of seven alpha subunits. The catalytic chamber with the active sites is on the inside of the barrel. Has a gated structure, the ends of the cylinder being occluded by the N-termini of the alpha-subunits. Is capped at one or both ends by the proteasome regulatory ATPase, PAN.

It is found in the cytoplasm. The enzyme catalyses Cleavage of peptide bonds with very broad specificity.. The formation of the proteasomal ATPase PAN-20S proteasome complex, via the docking of the C-termini of PAN into the intersubunit pockets in the alpha-rings, triggers opening of the gate for substrate entry. Interconversion between the open-gate and close-gate conformations leads to a dynamic regulation of the 20S proteasome proteolysis activity. In terms of biological role, component of the proteasome core, a large protease complex with broad specificity involved in protein degradation. The polypeptide is Proteasome subunit beta 1 (Pyrobaculum arsenaticum (strain DSM 13514 / JCM 11321 / PZ6)).